Consider the following 159-residue polypeptide: NADH-quinone oxidoreductase subunit B (159 aa).

Cysteine 37, cysteine 38, cysteine 102, and cysteine 132 together coordinate [4Fe-4S] cluster.

It belongs to the complex I 20 kDa subunit family. NDH-1 is composed of 14 different subunits. Subunits NuoB, C, D, E, F, and G constitute the peripheral sector of the complex. Requires [4Fe-4S] cluster as cofactor.

It localises to the cell inner membrane. The catalysed reaction is a quinone + NADH + 5 H(+)(in) = a quinol + NAD(+) + 4 H(+)(out). NDH-1 shuttles electrons from NADH, via FMN and iron-sulfur (Fe-S) centers, to quinones in the respiratory chain. The immediate electron acceptor for the enzyme in this species is believed to be ubiquinone. Couples the redox reaction to proton translocation (for every two electrons transferred, four hydrogen ions are translocated across the cytoplasmic membrane), and thus conserves the redox energy in a proton gradient. The chain is NADH-quinone oxidoreductase subunit B from Variovorax paradoxus (strain S110).